A 503-amino-acid chain; its full sequence is Maturase K (503 aa).

This sequence belongs to the intron maturase 2 family. MatK subfamily.

It is found in the plastid. Its subcellular location is the chloroplast. In terms of biological role, usually encoded in the trnK tRNA gene intron. Probably assists in splicing its own and other chloroplast group II introns. The chain is Maturase K from Syzygium australe (Brush cherry).